Consider the following 199-residue polypeptide: MVKIGVCGPVGSGKTALIEALTRHMSKDYDMAVITNDIYTKEDAEFMCKNSVMPRDRIIGVETGGCPHTAIREDASMNLEAVEEMHGRFPNLELLLIESGGDNLSATFNPELADFTIFVIDVAEGDKIPRKGGPGITRSDLLVINKIDLAPYVGADLKVMERDSKKMRGEKPFIFTNIRSKEGLDDVIAWIKRNALLED.

Residue 8-15 (GPVGSGKT) participates in GTP binding.

It belongs to the SIMIBI class G3E GTPase family. UreG subfamily. Homodimer. UreH, UreF and UreG form a complex that acts as a GTP-hydrolysis-dependent molecular chaperone, activating the urease apoprotein by helping to assemble the nickel containing metallocenter of UreC. The UreE protein probably delivers the nickel.

It localises to the cytoplasm. Facilitates the functional incorporation of the urease nickel metallocenter. This process requires GTP hydrolysis, probably effectuated by UreG. The sequence is that of Urease accessory protein UreG from Helicobacter acinonychis (strain Sheeba).